Consider the following 233-residue polypeptide: Biosynthetic peptidoglycan transglycosylase (233 aa).

Residues 8–28 (LIALPVGIFIFFNAYVYGNII) form a helical membrane-spanning segment.

This sequence belongs to the glycosyltransferase 51 family.

The protein resides in the cell inner membrane. It catalyses the reaction [GlcNAc-(1-&gt;4)-Mur2Ac(oyl-L-Ala-gamma-D-Glu-L-Lys-D-Ala-D-Ala)](n)-di-trans,octa-cis-undecaprenyl diphosphate + beta-D-GlcNAc-(1-&gt;4)-Mur2Ac(oyl-L-Ala-gamma-D-Glu-L-Lys-D-Ala-D-Ala)-di-trans,octa-cis-undecaprenyl diphosphate = [GlcNAc-(1-&gt;4)-Mur2Ac(oyl-L-Ala-gamma-D-Glu-L-Lys-D-Ala-D-Ala)](n+1)-di-trans,octa-cis-undecaprenyl diphosphate + di-trans,octa-cis-undecaprenyl diphosphate + H(+). It participates in cell wall biogenesis; peptidoglycan biosynthesis. Peptidoglycan polymerase that catalyzes glycan chain elongation from lipid-linked precursors. This chain is Biosynthetic peptidoglycan transglycosylase, found in Neisseria meningitidis serogroup C / serotype 2a (strain ATCC 700532 / DSM 15464 / FAM18).